The primary structure comprises 103 residues: Large ribosomal subunit protein bL21 (103 aa).

Belongs to the bacterial ribosomal protein bL21 family. As to quaternary structure, part of the 50S ribosomal subunit. Contacts protein L20.

Functionally, this protein binds to 23S rRNA in the presence of protein L20. The protein is Large ribosomal subunit protein bL21 of Ectopseudomonas mendocina (strain ymp) (Pseudomonas mendocina).